Here is a 414-residue protein sequence, read N- to C-terminus: Poly(3-hydroxyalkanoate) depolymerase C (414 aa).

The signal sequence occupies residues 1–37 (MLAKQIKKANSRSTLLRKSLLFAAPIILAVSSSSVYA). Residue serine 154 is the Charge relay system of the active site.

Belongs to the AB hydrolase superfamily. Lipase family.

It localises to the secreted. Functionally, specific for poly(hydroxyalkanoic acid) consisting of monomers of four or five carbon atoms and for P-nitrophenylbutyrate as substrates. This chain is Poly(3-hydroxyalkanoate) depolymerase C (phaZ1), found in Paucimonas lemoignei (Pseudomonas lemoignei).